The chain runs to 97 residues: uncharacterized protein (97 aa).

This is an uncharacterized protein from Caenorhabditis elegans.